The primary structure comprises 66 residues: Beta-mammal toxin Css2 (66 aa).

The LCN-type CS-alpha/beta domain occupies 1-66 (KEGYLVSKST…VWPLPNKTCN (66 aa)). 4 disulfides stabilise this stretch: C12/C65, C16/C41, C25/C46, and C29/C48. Asparagine amide is present on N66.

It belongs to the long (4 C-C) scorpion toxin superfamily. Sodium channel inhibitor family. Beta subfamily. C-terminal amidation increases its affinity for sodium channels. Expressed by the venom gland.

It is found in the secreted. Functionally, beta toxin that binds site-4 of sodium channels (Nav) and reduces peak current (observed on Nav1.6/SCN8A (IC(50)=307 nM)), shifts the voltage of activation toward more negative potentials (observed on Nav1.6, Nav1.1 (weak), Nav1.2 (weak), and Nav1.7 (weak)), and induces resurgent currents at negative voltages following brief and strong depolarizations (observed on Nav1.6, Nav1.1 (weak), and Nav1.7 (weak)). A reduction of peak current of Nav1.5/SCN7A has been observed in another study (IC(50)=35-40 nM). This toxin is only active on mammals. It has been shown to bind phospholipids. The chain is Beta-mammal toxin Css2 from Centruroides suffusus (Durango bark scorpion).